The primary structure comprises 418 residues: D-amino acid dehydrogenase 1 (418 aa).

3-17 is a binding site for FAD; it reads IMVLGGGVIGVTTAY.

The protein belongs to the DadA oxidoreductase family. FAD serves as cofactor.

The enzyme catalyses a D-alpha-amino acid + A + H2O = a 2-oxocarboxylate + AH2 + NH4(+). The protein operates within amino-acid degradation; D-alanine degradation; NH(3) and pyruvate from D-alanine: step 1/1. In terms of biological role, oxidative deamination of D-amino acids. The polypeptide is D-amino acid dehydrogenase 1 (dadA1) (Mesorhizobium japonicum (strain LMG 29417 / CECT 9101 / MAFF 303099) (Mesorhizobium loti (strain MAFF 303099))).